Consider the following 572-residue polypeptide: DBH-like monooxygenase protein 2 homolog (572 aa).

A signal peptide spans 1–26 (MGTCLKGNMSVLSLVLFLLSVQQFWA). N-linked (GlcNAc...) asparagine glycans are attached at residues N8, N64, N187, and N203. Residues 27–552 (QEDPLLPFSE…SPPEPCVRAC (526 aa)) lie on the Extracellular side of the membrane. Positions 42 to 157 (HNVQLKWGFD…LPMKLIYAYG (116 aa)) constitute a DOMON domain. The active site involves Y207. 2 disulfides stabilise this stretch: C209–C256 and C244–C263. 2 residues coordinate Cu cation: H237 and H238. H301 serves as a coordination point for Cu cation. Residue N306 is glycosylated (N-linked (GlcNAc...) asparagine). Cystine bridges form between C358-C472 and C435-C457. H381 is an active-site residue. Positions 381, 383, and 456 each coordinate Cu cation. Residues N468, N503, N518, and N534 are each glycosylated (N-linked (GlcNAc...) asparagine). The helical transmembrane segment at 553–571 (ATKNLAFMSLFLCLAGMWA) threads the bilayer. A topological domain (cytoplasmic) is located at residue S572.

It belongs to the copper type II ascorbate-dependent monooxygenase family. The cofactor is Cu(2+).

It is found in the membrane. This Danio rerio (Zebrafish) protein is DBH-like monooxygenase protein 2 homolog (moxd2).